Reading from the N-terminus, the 181-residue chain is Adenine phosphoribosyltransferase (181 aa).

Belongs to the purine/pyrimidine phosphoribosyltransferase family. In terms of assembly, homodimer.

The protein localises to the cytoplasm. It catalyses the reaction AMP + diphosphate = 5-phospho-alpha-D-ribose 1-diphosphate + adenine. Its pathway is purine metabolism; AMP biosynthesis via salvage pathway; AMP from adenine: step 1/1. In terms of biological role, catalyzes a salvage reaction resulting in the formation of AMP, that is energically less costly than de novo synthesis. The protein is Adenine phosphoribosyltransferase of Rhizobium leguminosarum bv. trifolii (strain WSM2304).